The primary structure comprises 3411 residues: Genome polyprotein (3411 aa).

Residues 1-104 (MSGRKAQGKT…LSSRKRRSHD (104 aa)) are Cytoplasmic-facing. The segment at 38–72 (PGPSRGVQGFISFFSFNILTGKKITAHLKRLWKML) is hydrophobic; homodimerization of capsid protein C. A propeptide spans 102–121 (SHDVLTVQFLILGMLLMAGG) (ER anchor for the capsid protein C, removed in mature form by serine protease NS3). The helical transmembrane segment at 105–125 (VLTVQFLILGMLLMAGGVTLV) threads the bilayer. Residues 126–244 (RKNRWLLLNV…GERQLQKIER (119 aa)) are Extracellular-facing. Residues N134 and N150 are each glycosylated (N-linked (GlcNAc...) asparagine; by host). Residues 245 to 265 (WLVRNPFFAVTALAIAYLVGS) traverse the membrane as a helical segment. At 266-270 (NMTQR) the chain is on the cytoplasmic side. Residues 271 to 285 (VVIALLVLAVGPAYS) traverse the membrane as a helical segment. Residues 286–730 (AHCIGITDRD…TVFGSAFQGL (445 aa)) are Extracellular-facing. Cystine bridges form between C288–C315, C345–C401, C345–C406, C359–C390, C377–C401, C377–C406, C467–C568, and C585–C615. The tract at residues 383–396 (DRGWGNGCGLFGKG) is fusion peptide. Residues 731 to 751 (FGGLSWITKVIMGAVLIWVGI) form a helical membrane-spanning segment. Residues 752–757 (NTRNMT) lie on the Extracellular side of the membrane. The helical transmembrane segment at 758–778 (MSMSMILVGVIMMFLSLGVGA) threads the bilayer. At 779-1132 (DQGCAINFGK…LVRSWVTAGE (354 aa)) the chain is on the extracellular side. 6 cysteine pairs are disulfide-bonded: C782/C793, C833/C921, C957/C1002, C1058/C1107, C1069/C1091, and C1090/C1094. Residues N908 and N986 are each glycosylated (N-linked (GlcNAc...) asparagine; by host). The chain crosses the membrane as a helical span at residues 1133–1153 (IHAVPFGLVSMMIAMEVVLRK). Residues 1154–1201 (RQGPKQMLVGGMVLLGAMLVGQVTLLDLLKLTMAVGLHFHEMNNGGDA) are Cytoplasmic-facing. A helical membrane pass occupies residues 1202–1222 (MYMALIAAFSIRPGLLIGFGL). At 1223–1287 (RTLWSPRERL…ILPLMALLTP (65 aa)) the chain is on the lumenal side. The chain crosses the membrane as a helical span at residues 1288–1308 (VTMAEVRLATMLLCAVVIIGV). The Cytoplasmic segment spans residues 1309-1355 (LHQNSKDTSMQKTIPLVALTLTSYLGLTQPFLGLCAFLATRIFGRRS). Residues 1356–1376 (IPVNEALAAAGLVGVLAGLAF) traverse the membrane as a helical segment. The Lumenal segment spans residues 1377 to 1378 (QE). Residues 1379–1399 (MENFLGPIAVGGILMMLVSVA) form a helical membrane-spanning segment. Residues 1400-1456 (GRVDGLELKKLGEVSWEEEAEISGSSARYDVALSEQGEFKLLSEEKVPWDQVVMTSL) are Cytoplasmic-facing. Residues 1407-1446 (LKKLGEVSWEEEAEISGSSARYDVALSEQGEFKLLSEEKV) form an interacts with and activates NS3 protease region. An intramembrane region (helical) is located at residues 1457–1477 (ALVGAAIHPSALLLVLAGWLF). Residues 1478 to 2157 (HVKGARRSGD…RNALSMMPEA (680 aa)) are Cytoplasmic-facing. A Peptidase S7 domain is found at 1485-1665 (SGDVLWDIPT…EVKEEGKEEL (181 aa)). Catalysis depends on charge relay system; for serine protease NS3 activity residues H1537, D1561, and S1622. The region spanning 1669–1825 (PTMLKKGMTT…HSNGEIEDVQ (157 aa)) is the Helicase ATP-binding domain. The segment at 1673-1676 (KKGM) is important for RNA-binding. 1682–1689 (YHPGAGKT) contributes to the ATP binding site. Positions 1773 to 1776 (DEAH) match the DEAH box motif. The Helicase C-terminal domain maps to 1820-1997 (EIEDVQTDIP…VRGGMVAPLY (178 aa)). K1877 is subject to N6-acetyllysine; by host. Residues 2158-2178 (MTIVMLFILAGLLTSGMVIFF) form a helical membrane-spanning segment. Topologically, residues 2179–2186 (MSPKGISR) are lumenal. Residues 2187-2207 (MSMAMGTMAGCGYLMFLGGAK) constitute an intramembrane region (helical). At 2208–2209 (PT) the chain is on the lumenal side. The helical transmembrane segment at 2210-2230 (HISYIMLIFFVLMVVVIPEPG) threads the bilayer. Over 2231-2241 (QQRSIQDNQVA) the chain is Cytoplasmic. The helical transmembrane segment at 2242–2262 (YLIIGILTLVSVVAANELGML) threads the bilayer. Residues 2263-2293 (ERTKEDLFGKKNLIPSSASPWSWPDLDLKPG) are Lumenal-facing. The helical intramembrane region spans 2294–2314 (AAWTVYVGIVTILSPMLHHWI). The Lumenal portion of the chain corresponds to 2315-2360 (KVEYGNLSLSGIAQSASVLSFMDKGIPFMKMNISVIILLVSGWNSI). Residues 2361 to 2380 (TVMPLLCGIGCAMLHWTLIL) traverse the membrane as a helical segment. Topologically, residues 2381 to 2421 (PGIKAQQSKLPQRRVFHGVAKNPVVDGNPTVDIEEAPEMPA) are cytoplasmic. The helical transmembrane segment at 2422-2442 (LYEKKLALYLLLALSLASVAM) threads the bilayer. Over 2443-2445 (CRT) the chain is Lumenal. The chain crosses the membrane as a helical span at residues 2446–2466 (PFSLAEGIVLASAALGPLIEG). The Cytoplasmic portion of the chain corresponds to 2467–3411 (NTSLLWNGPM…DADLQPGELI (945 aa)). One can recognise an mRNA cap 0-1 NS5-type MT domain in the interval 2507-2771 (GRANGKTLGE…DVILPIGTRS (265 aa)). S2562 lines the S-adenosyl-L-methionine pocket. S2562 is subject to Phosphoserine. K2567 functions as the For 2'-O-MTase activity in the catalytic mechanism. Residues G2592, W2593, T2610, L2611, D2637, and I2638 each contribute to the S-adenosyl-L-methionine site. The active-site For 2'-O-MTase activity is the D2652. S-adenosyl-L-methionine is bound at residue I2653. Active-site for 2'-O-MTase activity residues include K2688 and E2724. An S-adenosyl-L-methionine-binding site is contributed by Y2726. A Nuclear localization signal motif is present at residues 2878 to 2911 (RKIMKVVNRWLFRHLAREKNPRLCTKEEFIAKVR). E2945, H2949, C2954, and C2957 together coordinate Zn(2+). In terms of domain architecture, RdRp catalytic spans 3035 to 3187 (GGFYADDTAG…RPIDDRFGMA (153 aa)). Zn(2+) contacts are provided by H3222, C3238, and C3357.

The protein in the N-terminal section; belongs to the class I-like SAM-binding methyltransferase superfamily. mRNA cap 0-1 NS5-type methyltransferase family. Homodimer. Interacts (via N-terminus) with host EXOC1 (via C-terminus); this interaction results in EXOC1 degradation through the proteasome degradation pathway. As to quaternary structure, forms heterodimers with envelope protein E in the endoplasmic reticulum and Golgi. In terms of assembly, homodimer; in the endoplasmic reticulum and Golgi. Interacts with protein prM. Interacts with non-structural protein 1. Homodimer; Homohexamer when secreted. Interacts with envelope protein E. As to quaternary structure, interacts (via N-terminus) with serine protease NS3. In terms of assembly, forms a heterodimer with serine protease NS3. May form homooligomers. Forms a heterodimer with NS2B. Interacts with non-structural protein 2A (via N-terminus). Interacts with NS4B. Interacts with unphosphorylated RNA-directed RNA polymerase NS5; this interaction stimulates RNA-directed RNA polymerase NS5 guanylyltransferase activity. NS3 interacts with host PDCD6IP; this interaction contributes to virion release. As to quaternary structure, interacts with serine protease NS3. In terms of assembly, homodimer. Interacts with host STAT2; this interaction prevents the establishment of cellular antiviral state. Interacts with serine protease NS3. Interacts with host TRIM23; this interaction leads to NS5 ubiquitination. Post-translationally, specific enzymatic cleavages in vivo yield mature proteins. The nascent capsid protein C contains a C-terminal hydrophobic domain that act as a signal sequence for translocation of prM into the lumen of the ER. Mature capsid protein C is cleaved at a site upstream of this hydrophobic domain by NS3. prM is cleaved in post-Golgi vesicles by a host furin, releasing the mature small envelope protein M, and peptide pr. Non-structural protein 2A-alpha, a C-terminally truncated form of non-structural protein 2A, results from partial cleavage by NS3. Specific enzymatic cleavages in vivo yield mature proteins peptide 2K acts as a signal sequence and is removed from the N-terminus of NS4B by the host signal peptidase in the ER lumen. Signal cleavage at the 2K-4B site requires a prior NS3 protease-mediated cleavage at the 4A-2K site. Cleaved in post-Golgi vesicles by a host furin, releasing the mature small envelope protein M, and peptide pr. This cleavage is incomplete as up to 30% of viral particles still carry uncleaved prM. In terms of processing, N-glycosylated. Post-translationally, N-glycosylated. The excreted form is glycosylated and this is required for efficient secretion of the protein from infected cells. Polyubiquitinated; ubiquitination is probably mediated by host TRIM23 and is prerequisite for NS5-STAT2 interaction. NS5 is not ISGylated or sumoylated. In terms of processing, acetylated by host KAT5. Acetylation modulates NS3 RNA-binding and unwinding activities and plays an important positive role for viral replication. Post-translationally, phosphorylated on serines residues. This phosphorylation may trigger NS5 nuclear localization.

The protein resides in the virion. The protein localises to the host nucleus. It is found in the host cytoplasm. Its subcellular location is the host perinuclear region. It localises to the secreted. The protein resides in the virion membrane. The protein localises to the host endoplasmic reticulum membrane. The catalysed reaction is Selective hydrolysis of -Xaa-Xaa-|-Yaa- bonds in which each of the Xaa can be either Arg or Lys and Yaa can be either Ser or Ala.. It carries out the reaction RNA(n) + a ribonucleoside 5'-triphosphate = RNA(n+1) + diphosphate. The enzyme catalyses a ribonucleoside 5'-triphosphate + H2O = a ribonucleoside 5'-diphosphate + phosphate + H(+). It catalyses the reaction ATP + H2O = ADP + phosphate + H(+). The catalysed reaction is a 5'-end (5'-triphosphoguanosine)-ribonucleoside in mRNA + S-adenosyl-L-methionine = a 5'-end (N(7)-methyl 5'-triphosphoguanosine)-ribonucleoside in mRNA + S-adenosyl-L-homocysteine. It carries out the reaction a 5'-end (N(7)-methyl 5'-triphosphoguanosine)-ribonucleoside in mRNA + S-adenosyl-L-methionine = a 5'-end (N(7)-methyl 5'-triphosphoguanosine)-(2'-O-methyl-ribonucleoside) in mRNA + S-adenosyl-L-homocysteine + H(+). In terms of biological role, plays a role in virus budding by binding to the cell membrane and gathering the viral RNA into a nucleocapsid that forms the core of a mature virus particle. During virus entry, may induce genome penetration into the host cytoplasm after hemifusion induced by the surface proteins. Can migrate to the cell nucleus where it modulates host functions. Functionally, inhibits RNA silencing by interfering with host Dicer. Its function is as follows. Prevents premature fusion activity of envelope proteins in trans-Golgi by binding to envelope protein E at pH6.0. After virion release in extracellular space, gets dissociated from E dimers. Acts as a chaperone for envelope protein E during intracellular virion assembly by masking and inactivating envelope protein E fusion peptide. prM is the only viral peptide matured by host furin in the trans-Golgi network probably to avoid catastrophic activation of the viral fusion activity in acidic Golgi compartment prior to virion release. prM-E cleavage is inefficient, and many virions are only partially matured. These uncleaved prM would play a role in immune evasion. In terms of biological role, may play a role in virus budding. Exerts cytotoxic effects by activating a mitochondrial apoptotic pathway through M ectodomain. May display a viroporin activity. Functionally, binds to host cell surface receptor and mediates fusion between viral and cellular membranes. Envelope protein is synthesized in the endoplasmic reticulum in the form of heterodimer with protein prM. They play a role in virion budding in the ER, and the newly formed immature particle is covered with 60 spikes composed of heterodimer between precursor prM and envelope protein E. The virion is transported to the Golgi apparatus where the low pH causes dissociation of PrM-E heterodimers and formation of E homodimers. prM-E cleavage is inefficient, and many virions are only partially matured. These uncleaved prM would play a role in immune evasion. Its function is as follows. Involved in immune evasion, pathogenesis and viral replication. Once cleaved off the polyprotein, is targeted to three destinations: the viral replication cycle, the plasma membrane and the extracellular compartment. Essential for viral replication. Required for formation of the replication complex and recruitment of other non-structural proteins to the ER-derived membrane structures. Excreted as a hexameric lipoparticle that plays a role against host immune response. Antagonizing the complement function. Binds to the host macrophages and dendritic cells. Inhibits signal transduction originating from Toll-like receptor 3 (TLR3). Component of the viral RNA replication complex that functions in virion assembly and antagonizes the host immune response. In terms of biological role, required cofactor for the serine protease function of NS3. May have membrane-destabilizing activity and form viroporins. Functionally, displays three enzymatic activities: serine protease, NTPase and RNA helicase. NS3 serine protease, in association with NS2B, performs its autocleavage and cleaves the polyprotein at dibasic sites in the cytoplasm: C-prM, NS2A-NS2B, NS2B-NS3, NS3-NS4A, NS4A-2K and NS4B-NS5. NS3 RNA helicase binds RNA and unwinds dsRNA in the 3' to 5' direction. Also plays a role in virus assembly. Its function is as follows. Regulates the ATPase activity of the NS3 helicase activity. NS4A allows NS3 helicase to conserve energy during unwinding. Functions as a signal peptide for NS4B and is required for the interferon antagonism activity of the latter. In terms of biological role, induces the formation of ER-derived membrane vesicles where the viral replication takes place. Inhibits interferon (IFN)-induced host STAT1 phosphorylation and nuclear translocation, thereby preventing the establishment of cellular antiviral state by blocking the IFN-alpha/beta pathway. Functionally, replicates the viral (+) and (-) RNA genome, and performs the capping of genomes in the cytoplasm. NS5 methylates viral RNA cap at guanine N-7 and ribose 2'-O positions. Besides its role in RNA genome replication, also prevents the establishment of cellular antiviral state by blocking the interferon-alpha/beta (IFN-alpha/beta) signaling pathway. IFN-I induces binding of NS5 to host IFN-activated transcription factor STAT2, preventing its transcriptional activity. Host TRIM23 is the E3 ligase that interacts with and polyubiquitinates NS5 to promote its binding to STAT2 and trigger IFN-I signaling inhibition. The protein is Genome polyprotein of Yellow fever virus (isolate Ivory Coast/85-82H/1982) (YFV).